Reading from the N-terminus, the 123-residue chain is NADH-quinone oxidoreductase subunit A (123 aa).

3 helical membrane passes run 11–31, 68–88, and 93–113; these read YLPI…IMIL, LVAI…PWAI, and IGKI…IGFI.

The protein belongs to the complex I subunit 3 family. As to quaternary structure, NDH-1 is composed of 14 different subunits. Subunits NuoA, H, J, K, L, M, N constitute the membrane sector of the complex.

The protein resides in the cell inner membrane. The enzyme catalyses a quinone + NADH + 5 H(+)(in) = a quinol + NAD(+) + 4 H(+)(out). Functionally, NDH-1 shuttles electrons from NADH, via FMN and iron-sulfur (Fe-S) centers, to quinones in the respiratory chain. The immediate electron acceptor for the enzyme in this species is believed to be ubiquinone. Couples the redox reaction to proton translocation (for every two electrons transferred, four hydrogen ions are translocated across the cytoplasmic membrane), and thus conserves the redox energy in a proton gradient. The protein is NADH-quinone oxidoreductase subunit A of Rickettsia felis (strain ATCC VR-1525 / URRWXCal2) (Rickettsia azadi).